A 107-amino-acid polypeptide reads, in one-letter code: Glutaconyl-CoA decarboxylase subunit delta (107 aa).

The chain crosses the membrane as a helical span at residues 10–32; that stretch reads MINMTIVFGVLIVLGILMVLIHA. Residues 37–60 form a disordered region; sequence KKVQGKKKPVVAKPAPSAAASKRQ. Residues 47–57 are compositionally biased toward low complexity; sequence VAKPAPSAAAS.

It belongs to the OadG family. Heterooctamer consisting of two alpha, two beta, two gamma and two delta subunits.

It is found in the cell membrane. It catalyses the reaction (2E)-glutaconyl-CoA + Na(+)(in) + H(+) = (2E)-butenoyl-CoA + Na(+)(out) + CO2. It participates in amino-acid degradation; L-glutamate degradation via hydroxyglutarate pathway; crotonoyl-CoA from L-glutamate: step 5/5. Part of the primary sodium pump glutaconyl-CoA decarboxylase (GCD). Possible membrane anchor for the alpha subunit. The polypeptide is Glutaconyl-CoA decarboxylase subunit delta (gcdD) (Acidaminococcus fermentans (strain ATCC 25085 / DSM 20731 / CCUG 9996 / CIP 106432 / VR4)).